The chain runs to 316 residues: Bifunctional peptidase and (3S)-lysyl hydroxylase JMJD7 (316 aa).

Cys-19 bears the Cysteine sulfenic acid (-SOH) mark. 2-oxoglutarate is bound by residues Tyr-123 and Thr-172. Tyr-123 is a succinate binding site. The 187-residue stretch at 124–310 (IQKQNSNLSV…YCYYRMLEQM (187 aa)) folds into the JmjC domain. The Fe cation site is built by His-175 and Asp-177. 3 residues coordinate 2-oxoglutarate: Asn-181, Tyr-183, and Lys-190. Tyr-183 and Lys-190 together coordinate succinate. His-278 contacts Fe cation. Position 292 (Trp-292) interacts with 2-oxoglutarate.

Homodimer; disulfide-linked. It depends on Fe(2+) as a cofactor. Expressed in the pars intercerebralis and fan-shaped body, regions known to be involved in sleep.

Its subcellular location is the nucleus. The protein resides in the cytoplasm. It catalyses the reaction L-lysyl-[protein] + 2-oxoglutarate + O2 = (3S)-3-hydroxy-L-lysyl-[protein] + succinate + CO2. Its function is as follows. Bifunctional enzyme that acts both as an endopeptidase and 2-oxoglutarate-dependent monooxygenase. Endopeptidase that cleaves histones N-terminal tails at the carboxyl side of methylated arginine or lysine residues, to generate 'tailless nucleosomes', which may trigger transcription elongation. Hydroxylates the guanylate binding protein 128up. May be involved in regulation of behavior and circadian rhythms. This chain is Bifunctional peptidase and (3S)-lysyl hydroxylase JMJD7, found in Drosophila melanogaster (Fruit fly).